Here is a 953-residue protein sequence, read N- to C-terminus: TPR repeat-containing protein ZIP4 (953 aa).

One copy of the TPR 1 repeat lies at 129 to 162 (ASFFHRSGLAWLDLGRVDLASACFEKATPLVSAA). The tract at residues 248–269 (AASPSSSSPRTPPYGGATPKTP) is disordered. TPR repeat units lie at residues 432–465 (HALL…VSRD) and 473–506 (ADCF…EPNI). The interval 924–953 (RVSGDEPDECSQEEAPKASISGSMSQPVLV) is disordered. The segment covering 943-953 (ISGSMSQPVLV) has biased composition (polar residues).

It is found in the nucleus. It localises to the chromosome. In terms of biological role, required for crossover formation, complete synapsis of homologous chromosomes and bivalent formation during meiosis. Is specific to recombination events resulting in interference-sensitive crossovers (class I meiotic crossover) and works cooperatively with MER3 to promote crossovers. The chain is TPR repeat-containing protein ZIP4 from Oryza sativa subsp. indica (Rice).